Consider the following 1215-residue polypeptide: DNA-directed RNA polymerase subunit beta' (1215 aa).

Residues cysteine 60, cysteine 62, cysteine 75, and cysteine 78 each coordinate Zn(2+). Mg(2+) is bound by residues aspartate 450, aspartate 452, and aspartate 454. Zn(2+) is bound by residues cysteine 818, cysteine 892, cysteine 899, and cysteine 902.

It belongs to the RNA polymerase beta' chain family. The RNAP catalytic core consists of 2 alpha, 1 beta, 1 beta' and 1 omega subunit. When a sigma factor is associated with the core the holoenzyme is formed, which can initiate transcription. Mg(2+) serves as cofactor. Zn(2+) is required as a cofactor.

It catalyses the reaction RNA(n) + a ribonucleoside 5'-triphosphate = RNA(n+1) + diphosphate. DNA-dependent RNA polymerase catalyzes the transcription of DNA into RNA using the four ribonucleoside triphosphates as substrates. The sequence is that of DNA-directed RNA polymerase subunit beta' from Streptococcus sanguinis (strain SK36).